We begin with the raw amino-acid sequence, 122 residues long: Large ribosomal subunit protein uL14 (122 aa).

This sequence belongs to the universal ribosomal protein uL14 family. Part of the 50S ribosomal subunit. Forms a cluster with proteins L3 and L19. In the 70S ribosome, L14 and L19 interact and together make contacts with the 16S rRNA in bridges B5 and B8.

Functionally, binds to 23S rRNA. Forms part of two intersubunit bridges in the 70S ribosome. This is Large ribosomal subunit protein uL14 from Leuconostoc citreum (strain KM20).